Here is a 459-residue protein sequence, read N- to C-terminus: Sperm-tail PG-rich repeat-containing protein 2 (459 aa).

STPGR repeat units follow at residues 21-30, 63-73, 119-148, 157-203, 213-243, 257-268, 351-377, 400-410, and 433-443; these read VGPGSYQVPF, PGPGHYNVSEA, TLGP…NSSG, GPGP…QEKK, TPAP…FGQS, PGPGFYNVLNNT, PAPG…PRSL, GPGPAAYNPVL, and TPGPATYEISQ.

This Homo sapiens (Human) protein is Sperm-tail PG-rich repeat-containing protein 2 (STPG2).